The following is a 199-amino-acid chain: Ribosome maturation factor RimM (199 aa).

Residues 95–168 form the PRC barrel domain; the sequence is EDEFYHADLV…FVRVDPVAAG (74 aa). The segment at 167–199 is disordered; sequence AGLVEDEDGDAPREEDFDPKGRPRGPRDAGGNR. Residues 176 to 193 show a composition bias toward basic and acidic residues; it reads DAPREEDFDPKGRPRGPR.

It belongs to the RimM family. As to quaternary structure, binds ribosomal protein uS19.

The protein localises to the cytoplasm. An accessory protein needed during the final step in the assembly of 30S ribosomal subunit, possibly for assembly of the head region. Essential for efficient processing of 16S rRNA. May be needed both before and after RbfA during the maturation of 16S rRNA. It has affinity for free ribosomal 30S subunits but not for 70S ribosomes. This is Ribosome maturation factor RimM from Mesorhizobium japonicum (strain LMG 29417 / CECT 9101 / MAFF 303099) (Mesorhizobium loti (strain MAFF 303099)).